The following is a 340-amino-acid chain: Glycerol-3-phosphate dehydrogenase [NAD(P)+] (340 aa).

Serine 11, tryptophan 12, arginine 33, and lysine 106 together coordinate NADPH. Positions 106, 137, and 139 each coordinate sn-glycerol 3-phosphate. Residue alanine 141 participates in NADPH binding. Sn-glycerol 3-phosphate contacts are provided by lysine 192, aspartate 245, serine 255, arginine 256, and asparagine 257. The active-site Proton acceptor is lysine 192. Arginine 256 is a binding site for NADPH. Residues valine 280 and glutamate 282 each contribute to the NADPH site.

This sequence belongs to the NAD-dependent glycerol-3-phosphate dehydrogenase family.

It localises to the cytoplasm. It carries out the reaction sn-glycerol 3-phosphate + NAD(+) = dihydroxyacetone phosphate + NADH + H(+). It catalyses the reaction sn-glycerol 3-phosphate + NADP(+) = dihydroxyacetone phosphate + NADPH + H(+). It participates in membrane lipid metabolism; glycerophospholipid metabolism. In terms of biological role, catalyzes the reduction of the glycolytic intermediate dihydroxyacetone phosphate (DHAP) to sn-glycerol 3-phosphate (G3P), the key precursor for phospholipid synthesis. This chain is Glycerol-3-phosphate dehydrogenase [NAD(P)+], found in Bacillus cereus (strain B4264).